Reading from the N-terminus, the 298-residue chain is MWAAGALKVRDCLAATSVTLRRCLKLGATMAKSKFEYVRDFEADDTCLPHCWVVVRLDGRNFHRFAEKHSFIKPNDSRALHLMTKCAQTVMNELEDIVIAYGQSDEYSFVFKRKSNWFKRRASKFMTHVVSQFASSYVFYWRDYFEDQPLLYPPGFDGRVIVYPSNQTLKDYLSWRQADCHINNLYNTVFWALVQQSGLTPLQAQERLQGTLAADKNEILFSEFNINYNNEPLMYRKGTVLIWQKVEEITTKEVKLPAEMEGKKMAVTRTRTMVVPLHCNIIGDAFWKEHPEILDEDS.

3 residues coordinate Mg(2+): aspartate 58, glycine 59, and aspartate 105. Residues 58-63 (DGRNFH) and 104-105 (SD) each bind GTP.

It belongs to the tRNA(His) guanylyltransferase family. As to quaternary structure, homotetramer. Interacts with MFN1 and MFN2; functions as a guanyl-nucleotide exchange factor/GEF for MFN2 and also probably MFN1. The cofactor is Mg(2+).

It localises to the cytoplasm. The protein localises to the mitochondrion. It catalyses the reaction a 5'-end ribonucleotide-tRNA(His) + GTP + ATP + H2O = a 5'-end phospho-guanosine-ribonucleotide-tRNA(His) + AMP + 2 diphosphate + H(+). Adds a GMP to the 5'-end of tRNA(His) after transcription and RNase P cleavage. This step is essential for proper recognition of the tRNA and for the fidelity of protein synthesis. Also functions as a guanyl-nucleotide exchange factor/GEF for the MFN1 and MFN2 mitofusins thereby regulating mitochondrial fusion. By regulating both mitochondrial dynamics and bioenergetic function, it contributes to cell survival following oxidative stress. This Bos taurus (Bovine) protein is Probable tRNA(His) guanylyltransferase (THG1L).